Reading from the N-terminus, the 309-residue chain is Porphobilinogen deaminase (309 aa).

C242 bears the S-(dipyrrolylmethanemethyl)cysteine mark.

This sequence belongs to the HMBS family. As to quaternary structure, monomer. It depends on dipyrromethane as a cofactor.

It carries out the reaction 4 porphobilinogen + H2O = hydroxymethylbilane + 4 NH4(+). Its pathway is porphyrin-containing compound metabolism; protoporphyrin-IX biosynthesis; coproporphyrinogen-III from 5-aminolevulinate: step 2/4. Functionally, tetrapolymerization of the monopyrrole PBG into the hydroxymethylbilane pre-uroporphyrinogen in several discrete steps. The sequence is that of Porphobilinogen deaminase from Legionella pneumophila (strain Lens).